The sequence spans 388 residues: MKLSKRIENLPPYLFVQISKKIAEKRAKGEDVISFAIGDPDLPTPKHILAELCKAAEDPSNHRYPETEGLPVLRKAMAEWYQKRFGVKLNPDTEVLPLIGSKEGIGHAAWCFLDPGDIALVPNPAYPVYAISSQLAGAEVFNLPLNKGNNFLPNLEAIPQNILSKAKVLWINYPNNPTGAVAGLSFFQEVANFAAKHNLAVCHDGPYSEIAFDGYKPVSFLEADGAKDVGIEFHSLSKSYNMTGWRIGMAVGNAKMIDALRRFKSNLDSGIPQAIQLMAIAALNGSQEIINQNCAIYQRRRDRLVEALRNIGMEVTAPKASLYIWAPVPESYTSASFATELLDKTGVVVTPGTGYGTAGEGYIRLSLTVPDEQIEKGIAKLAGYKKSS.

Positions 13, 38, 102, 126, and 176 each coordinate substrate. Pyridoxal 5'-phosphate contacts are provided by residues 101 to 102 (SK), Y126, N176, Y207, and 235 to 237 (SLS). N6-(pyridoxal phosphate)lysine is present on K238. R246 provides a ligand contact to pyridoxal 5'-phosphate. R364 serves as a coordination point for substrate.

It belongs to the class-I pyridoxal-phosphate-dependent aminotransferase family. LL-diaminopimelate aminotransferase subfamily. As to quaternary structure, homodimer. It depends on pyridoxal 5'-phosphate as a cofactor.

The catalysed reaction is (2S,6S)-2,6-diaminopimelate + 2-oxoglutarate = (S)-2,3,4,5-tetrahydrodipicolinate + L-glutamate + H2O + H(+). It participates in amino-acid biosynthesis; L-lysine biosynthesis via DAP pathway; LL-2,6-diaminopimelate from (S)-tetrahydrodipicolinate (aminotransferase route): step 1/1. In terms of biological role, involved in the synthesis of meso-diaminopimelate (m-DAP or DL-DAP), required for both lysine and peptidoglycan biosynthesis. Catalyzes the direct conversion of tetrahydrodipicolinate to LL-diaminopimelate. The polypeptide is LL-diaminopimelate aminotransferase (Dehalococcoides mccartyi (strain ATCC BAA-2100 / JCM 16839 / KCTC 5957 / BAV1)).